The sequence spans 670 residues: Histone-lysine N-methyltransferase, H3 lysine-9 specific SUVH1 (670 aa).

The segment at 53-140 (YPFSSSQANQ…RPISRPENMN (88 aa)) is disordered. A compositionally biased stretch (low complexity) spans 68–79 (NQAQYPPQHQQP). The span at 123–133 (VKRRIPKKRPI) shows a compositional bias: basic residues. In terms of domain architecture, YDG spans 211 to 357 (GIVPGVEIGD…HNTFKYKLVR (147 aa)). The Pre-SET domain occupies 432 to 492 (FGCDCANLCK…TCKNKVTQMG (61 aa)). Residues cysteine 434, cysteine 436, cysteine 440, cysteine 447, cysteine 449, cysteine 475, cysteine 479, cysteine 481, and cysteine 484 each contribute to the Zn(2+) site. One can recognise an SET domain in the interval 495–639 (VRLEVFKTAN…PMTELTYDYG (145 aa)). Residues 505 to 507 (RGW), aspartate 541, tyrosine 543, arginine 593, and 596 to 597 (NH) contribute to the S-adenosyl-L-methionine site. Positions 599, 658, 660, and 665 each coordinate Zn(2+). The region spanning 654–670 (GKRKCFCGSAYCRGSFG) is the Post-SET domain.

The protein belongs to the class V-like SAM-binding methyltransferase superfamily. Histone-lysine methyltransferase family. Suvar3-9 subfamily. Expressed in leaves stems and flowers.

The protein resides in the nucleus. The protein localises to the chromosome. It localises to the centromere. The enzyme catalyses L-lysyl(9)-[histone H3] + 2 S-adenosyl-L-methionine = N(6),N(6)-dimethyl-L-lysyl(9)-[histone H3] + 2 S-adenosyl-L-homocysteine + 2 H(+). In terms of biological role, histone methyltransferase. Methylates 'Lys-9' of histone H3. H3 'Lys-9' methylation represents a specific tag for epigenetic transcriptional repression. This Arabidopsis thaliana (Mouse-ear cress) protein is Histone-lysine N-methyltransferase, H3 lysine-9 specific SUVH1 (SUVH1).